A 127-amino-acid polypeptide reads, in one-letter code: Large ribosomal subunit protein uL18 (127 aa).

Belongs to the universal ribosomal protein uL18 family. Part of the 50S ribosomal subunit; part of the 5S rRNA/L5/L18/L25 subcomplex. Contacts the 5S and 23S rRNAs.

Its function is as follows. This is one of the proteins that bind and probably mediate the attachment of the 5S RNA into the large ribosomal subunit, where it forms part of the central protuberance. The protein is Large ribosomal subunit protein uL18 of Streptomyces griseus subsp. griseus (strain JCM 4626 / CBS 651.72 / NBRC 13350 / KCC S-0626 / ISP 5235).